We begin with the raw amino-acid sequence, 555 residues long: Transcription factor kojR (555 aa).

Residues cysteine 21–cysteine 47 constitute a DNA-binding region (zn(2)-C6 fungal-type). The segment at proline 51–proline 73 is disordered.

The protein localises to the nucleus. Its function is as follows. Transcription factor that regulates the gene cluster that mediates the biosynthesis of 5-hydroxy-2-hydroxymethyl-1,4-pyrone, also know as kojic acid, a by-product in the fermentation process of malting rice that acts as a chelation agent. Mediates the expression of kojA and kojT via binding of an 11-nucleotide palindromic sequence, 5'-CGRCTWAGYCG-3' (R=A/G, W=A/T, Y=C/T) within the target gene promoters. The chain is Transcription factor kojR from Aspergillus flavus (strain ATCC 200026 / FGSC A1120 / IAM 13836 / NRRL 3357 / JCM 12722 / SRRC 167).